A 622-amino-acid chain; its full sequence is Membrane protein insertase YidC (622 aa).

The helical transmembrane segment at 6–26 (IVLLIIFSTSLLFLWDAWVKE) threads the bilayer. Residues 47-87 (TQSKNNDGLPIPGSELTASQTGSDLNGIPSSGDTADSVTPR) form a disordered region. A compositionally biased stretch (polar residues) spans 62–83 (LTASQTGSDLNGIPSSGDTADS). The next 3 helical transmembrane spans lie at 381-401 (WGIA…PLSA), 451-471 (FPIL…LAAV), and 525-545 (PVAF…YSLV). Residues 563-622 (TAPSQDAPESPASKDAPELPVSNQVINDSENTEAPASGPADSPKKPVNIPRRMHKRTRKK) form a disordered region. Over residues 583–596 (VSNQVINDSENTEA) the composition is skewed to polar residues. Basic residues predominate over residues 613 to 622 (RRMHKRTRKK).

Belongs to the OXA1/ALB3/YidC family. Type 1 subfamily. Interacts with the Sec translocase complex via SecD. Specifically interacts with transmembrane segments of nascent integral membrane proteins during membrane integration.

Its subcellular location is the cell inner membrane. Required for the insertion and/or proper folding and/or complex formation of integral membrane proteins into the membrane. Involved in integration of membrane proteins that insert both dependently and independently of the Sec translocase complex, as well as at least some lipoproteins. Aids folding of multispanning membrane proteins. This Nitrosomonas eutropha (strain DSM 101675 / C91 / Nm57) protein is Membrane protein insertase YidC.